Consider the following 172-residue polypeptide: Adenine phosphoribosyltransferase (172 aa).

The protein belongs to the purine/pyrimidine phosphoribosyltransferase family. Homodimer.

Its subcellular location is the cytoplasm. The enzyme catalyses AMP + diphosphate = 5-phospho-alpha-D-ribose 1-diphosphate + adenine. The protein operates within purine metabolism; AMP biosynthesis via salvage pathway; AMP from adenine: step 1/1. In terms of biological role, catalyzes a salvage reaction resulting in the formation of AMP, that is energically less costly than de novo synthesis. The sequence is that of Adenine phosphoribosyltransferase from Methanococcus maripaludis (strain DSM 14266 / JCM 13030 / NBRC 101832 / S2 / LL).